A 148-amino-acid polypeptide reads, in one-letter code: UPF0134 protein MPN_410 (148 aa).

The protein belongs to the UPF0134 family.

The chain is UPF0134 protein MPN_410 from Mycoplasma pneumoniae (strain ATCC 29342 / M129 / Subtype 1) (Mycoplasmoides pneumoniae).